The chain runs to 334 residues: Holliday junction branch migration complex subunit RuvB (334 aa).

The interval 1–182 (MDDRMIDGEL…FGVLSRLEYY (182 aa)) is large ATPase domain (RuvB-L). Residues Leu21, Arg22, Gly63, Lys66, Thr67, Thr68, 129–131 (EDF), Arg172, Tyr182, and Arg219 contribute to the ATP site. Residue Thr67 participates in Mg(2+) binding. Residues 183 to 253 (EIKDLCNIVE…STKQALEMLQ (71 aa)) form a small ATPAse domain (RuvB-S) region. The segment at 256–334 (DAGLDHVDHK…HLGIKRTGED (79 aa)) is head domain (RuvB-H). DNA contacts are provided by Arg311 and Arg316.

It belongs to the RuvB family. As to quaternary structure, homohexamer. Forms an RuvA(8)-RuvB(12)-Holliday junction (HJ) complex. HJ DNA is sandwiched between 2 RuvA tetramers; dsDNA enters through RuvA and exits via RuvB. An RuvB hexamer assembles on each DNA strand where it exits the tetramer. Each RuvB hexamer is contacted by two RuvA subunits (via domain III) on 2 adjacent RuvB subunits; this complex drives branch migration. In the full resolvosome a probable DNA-RuvA(4)-RuvB(12)-RuvC(2) complex forms which resolves the HJ.

The protein localises to the cytoplasm. It catalyses the reaction ATP + H2O = ADP + phosphate + H(+). The RuvA-RuvB-RuvC complex processes Holliday junction (HJ) DNA during genetic recombination and DNA repair, while the RuvA-RuvB complex plays an important role in the rescue of blocked DNA replication forks via replication fork reversal (RFR). RuvA specifically binds to HJ cruciform DNA, conferring on it an open structure. The RuvB hexamer acts as an ATP-dependent pump, pulling dsDNA into and through the RuvAB complex. RuvB forms 2 homohexamers on either side of HJ DNA bound by 1 or 2 RuvA tetramers; 4 subunits per hexamer contact DNA at a time. Coordinated motions by a converter formed by DNA-disengaged RuvB subunits stimulates ATP hydrolysis and nucleotide exchange. Immobilization of the converter enables RuvB to convert the ATP-contained energy into a lever motion, pulling 2 nucleotides of DNA out of the RuvA tetramer per ATP hydrolyzed, thus driving DNA branch migration. The RuvB motors rotate together with the DNA substrate, which together with the progressing nucleotide cycle form the mechanistic basis for DNA recombination by continuous HJ branch migration. Branch migration allows RuvC to scan DNA until it finds its consensus sequence, where it cleaves and resolves cruciform DNA. This Oceanobacillus iheyensis (strain DSM 14371 / CIP 107618 / JCM 11309 / KCTC 3954 / HTE831) protein is Holliday junction branch migration complex subunit RuvB.